Consider the following 366-residue polypeptide: DNA primase large subunit PriL (366 aa).

[4Fe-4S] cluster is bound by residues C227, C298, C307, and C314.

The protein belongs to the eukaryotic-type primase large subunit family. Heterodimer of a small subunit (PriS) and a large subunit (PriL). The cofactor is [4Fe-4S] cluster.

Regulatory subunit of DNA primase, an RNA polymerase that catalyzes the synthesis of short RNA molecules used as primers for DNA polymerase during DNA replication. Stabilizes and modulates the activity of the small subunit, increasing the rate of DNA synthesis, and conferring RNA synthesis capability. The DNA polymerase activity may enable DNA primase to also catalyze primer extension after primer synthesis. May also play a role in DNA repair. This is DNA primase large subunit PriL from Methanocella arvoryzae (strain DSM 22066 / NBRC 105507 / MRE50).